We begin with the raw amino-acid sequence, 110 residues long: UPF0122 protein SE_0911 (110 aa).

Belongs to the UPF0122 family.

Functionally, might take part in the signal recognition particle (SRP) pathway. This is inferred from the conservation of its genetic proximity to ftsY/ffh. May be a regulatory protein. The protein is UPF0122 protein SE_0911 of Staphylococcus epidermidis (strain ATCC 12228 / FDA PCI 1200).